The primary structure comprises 572 residues: Hemagglutinin-neuraminidase (572 aa).

Over 1–31 (MEYWKHTNHGKDAGNELETSMATHGNKLTNK) the chain is Intravirion. A helical membrane pass occupies residues 32 to 52 (ITYILWTIILVLLSIVFIIVL). Topologically, residues 53–572 (INSIKSEKAH…FKTEIPKSCS (520 aa)) are virion surface. 2 cysteine pairs are disulfide-bonded: Cys190-Cys214 and Cys256-Cys269. The interval 252 to 257 (NRKSCS) is involved in neuraminidase activity. Residues Asn308 and Asn351 are each glycosylated (N-linked (GlcNAc...) asparagine; by host). 2 disulfide bridges follow: Cys355/Cys469 and Cys463/Cys473. N-linked (GlcNAc...) asparagine; by host glycosylation is present at Asn523. The cysteines at positions 535 and 544 are disulfide-linked.

The protein belongs to the paramyxoviruses hemagglutinin-neuraminidase family. As to quaternary structure, homotetramer; composed of disulfide-linked homodimers. Interacts with F protein trimer.

It is found in the virion membrane. Its subcellular location is the host cell membrane. The enzyme catalyses Hydrolysis of alpha-(2-&gt;3)-, alpha-(2-&gt;6)-, alpha-(2-&gt;8)- glycosidic linkages of terminal sialic acid residues in oligosaccharides, glycoproteins, glycolipids, colominic acid and synthetic substrates.. In terms of biological role, attaches the virus to sialic acid-containing cell receptors and thereby initiating infection. Binding of HN protein to the receptor induces a conformational change that allows the F protein to trigger virion/cell membranes fusion. Neuraminidase activity ensures the efficient spread of the virus by dissociating the mature virions from the neuraminic acid containing glycoproteins. The sequence is that of Hemagglutinin-neuraminidase (HN) from Homo sapiens (Human).